Here is a 464-residue protein sequence, read N- to C-terminus: tRNA(Ile2) 2-agmatinylcytidine synthetase TiaS (464 aa).

Belongs to the TiaS family.

It is found in the cytoplasm. The catalysed reaction is cytidine(34) in tRNA(Ile2) + agmatine + ATP + H2O = 2-agmatinylcytidine(34) in tRNA(Ile2) + AMP + 2 phosphate + 2 H(+). ATP-dependent agmatine transferase that catalyzes the formation of 2-agmatinylcytidine (agm2C) at the wobble position (C34) of tRNA(Ile2), converting the codon specificity from AUG to AUA. This chain is tRNA(Ile2) 2-agmatinylcytidine synthetase TiaS, found in Ignisphaera aggregans (strain DSM 17230 / JCM 13409 / AQ1.S1).